A 419-amino-acid polypeptide reads, in one-letter code: UDP-N-acetylglucosamine 1-carboxyvinyltransferase (419 aa).

Phosphoenolpyruvate is bound at residue Lys22 to Asn23. Arg91 provides a ligand contact to UDP-N-acetyl-alpha-D-glucosamine. The Proton donor role is filled by Cys115. Cys115 is subject to 2-(S-cysteinyl)pyruvic acid O-phosphothioketal. UDP-N-acetyl-alpha-D-glucosamine-binding positions include Arg120–Leu124, Lys160–Val163, Asp305, and Val327.

Belongs to the EPSP synthase family. MurA subfamily.

Its subcellular location is the cytoplasm. The catalysed reaction is phosphoenolpyruvate + UDP-N-acetyl-alpha-D-glucosamine = UDP-N-acetyl-3-O-(1-carboxyvinyl)-alpha-D-glucosamine + phosphate. Its pathway is cell wall biogenesis; peptidoglycan biosynthesis. In terms of biological role, cell wall formation. Adds enolpyruvyl to UDP-N-acetylglucosamine. The polypeptide is UDP-N-acetylglucosamine 1-carboxyvinyltransferase (Shigella dysenteriae serotype 1 (strain Sd197)).